Reading from the N-terminus, the 380-residue chain is uncharacterized protein (380 aa).

Belongs to the metallo-dependent hydrolases superfamily.

This is an uncharacterized protein from Methanocaldococcus jannaschii (strain ATCC 43067 / DSM 2661 / JAL-1 / JCM 10045 / NBRC 100440) (Methanococcus jannaschii).